Reading from the N-terminus, the 239-residue chain is MGHKVHPIGIRLGISADWNSKWYANKAEFAGYLAADLKVRQVLRKKMSQAGISKILIERPSNAACVSMHVARPGVVIGKRGEDIEMLRKQLSDIMGVSVHINVIEVRKPELDAQLVAESVAQQLERRIMFRRAMKRSVSNAIRLGALGIKISVAGRLNGAEIARSEWYREGRVPLQTLRADIGYGFSEAHTNYGVTGVKVLIYHGDIFSFSSVGQEKQDDGSRGDRNADRSSRRSREVR.

The region spanning 39 to 107 is the KH type-2 domain; that stretch reads VRQVLRKKMS…SVHINVIEVR (69 aa). The interval 214-239 is disordered; the sequence is GQEKQDDGSRGDRNADRSSRRSREVR. Residues 216-239 show a composition bias toward basic and acidic residues; sequence EKQDDGSRGDRNADRSSRRSREVR.

This sequence belongs to the universal ribosomal protein uS3 family. As to quaternary structure, part of the 30S ribosomal subunit. Forms a tight complex with proteins S10 and S14.

Binds the lower part of the 30S subunit head. Binds mRNA in the 70S ribosome, positioning it for translation. In Xylella fastidiosa (strain M12), this protein is Small ribosomal subunit protein uS3.